We begin with the raw amino-acid sequence, 170 residues long: Crossover junction endodeoxyribonuclease RuvC (170 aa).

Residues Asp-9, Glu-70, and Asp-145 contribute to the active site. Mg(2+) contacts are provided by Asp-9, Glu-70, and Asp-145.

The protein belongs to the RuvC family. In terms of assembly, homodimer which binds Holliday junction (HJ) DNA. The HJ becomes 2-fold symmetrical on binding to RuvC with unstacked arms; it has a different conformation from HJ DNA in complex with RuvA. In the full resolvosome a probable DNA-RuvA(4)-RuvB(12)-RuvC(2) complex forms which resolves the HJ. Mg(2+) serves as cofactor.

It localises to the cytoplasm. It catalyses the reaction Endonucleolytic cleavage at a junction such as a reciprocal single-stranded crossover between two homologous DNA duplexes (Holliday junction).. Its function is as follows. The RuvA-RuvB-RuvC complex processes Holliday junction (HJ) DNA during genetic recombination and DNA repair. Endonuclease that resolves HJ intermediates. Cleaves cruciform DNA by making single-stranded nicks across the HJ at symmetrical positions within the homologous arms, yielding a 5'-phosphate and a 3'-hydroxyl group; requires a central core of homology in the junction. The consensus cleavage sequence is 5'-(A/T)TT(C/G)-3'. Cleavage occurs on the 3'-side of the TT dinucleotide at the point of strand exchange. HJ branch migration catalyzed by RuvA-RuvB allows RuvC to scan DNA until it finds its consensus sequence, where it cleaves and resolves the cruciform DNA. The polypeptide is Crossover junction endodeoxyribonuclease RuvC (Chlamydia muridarum (strain MoPn / Nigg)).